The sequence spans 354 residues: Carbonic anhydrase 12 (354 aa).

Residues 1-24 (MPHRSLRATVVLLLVILKKQPSSS) form the signal peptide. Residues 25–301 (APLNGSKWTY…QGLLTDTGLS (277 aa)) lie on the Extracellular side of the membrane. 4 N-linked (GlcNAc...) asparagine glycosylation sites follow: Asn-28, Asn-42, Asn-80, and Asn-88. Residues 30–290 (SKWTYVGPAG…FDERLVYISF (261 aa)) form the Alpha-carbonic anhydrase domain. Cys-50 and Cys-231 are disulfide-bonded. Residue His-94 is the Proton donor/acceptor of the active site. Zn(2+) contacts are provided by His-120, His-122, and His-146. Residue 227 to 228 (TT) participates in substrate binding. The helical transmembrane segment at 302–322 (LGIILSVALAGVLGISIVLAV) threads the bilayer. Residues 323 to 354 (SIWLFKRKKSKKGDNKGVIYKPAIKKEAEVHA) lie on the Cytoplasmic side of the membrane.

This sequence belongs to the alpha-carbonic anhydrase family. Homodimer. It depends on Zn(2+) as a cofactor.

Its subcellular location is the membrane. It localises to the cell membrane. It carries out the reaction hydrogencarbonate + H(+) = CO2 + H2O. Inhibited by acetazolamide. Reversible hydration of carbon dioxide. This is Carbonic anhydrase 12 from Mus musculus (Mouse).